The primary structure comprises 2009 residues: Sodium channel protein type 1 subunit alpha (2009 aa).

At 1 to 128 the chain is on the cytoplasmic side; the sequence is MEQTVLVPPG…KIAIKILVHS (128 aa). Residues 28-48 show a composition bias toward basic and acidic residues; it reads RIAEEKAKNPKPDKKDDDENG. Residues 28-60 are disordered; it reads RIAEEKAKNPKPDKKDDDENGPKPNSDLEAGKN. Residues 110 to 454 form an I repeat; the sequence is ILTPFNPLRK…QQMLEQLKKQ (345 aa). The chain crosses the membrane as a helical span at residues 129–146; the sequence is LFSMLIMCTILTNCVFMT. Topologically, residues 147 to 152 are extracellular; the sequence is MSNPPD. A helical transmembrane segment spans residues 153 to 177; it reads WTKNVEYTFTGIYTFESLIKIIARG. At 178 to 188 the chain is on the cytoplasmic side; the sequence is FCLEDFTFLRD. The helical transmembrane segment at 189-205 threads the bilayer; the sequence is PWNWLDFTVITFAYVTE. Residues 206-213 lie on the Extracellular side of the membrane; that stretch reads FVDLGNVS. Residues 214-235 traverse the membrane as a helical segment; that stretch reads ALRTFRVLRALKTISVIPGLKT. Residues 236 to 245 lie on the Cytoplasmic side of the membrane; that stretch reads IVGALIQSVK. Residues 246-269 traverse the membrane as a helical segment; it reads KLSDVMILTVFCLSVFALIGLQLF. Over 270–369 the chain is Extracellular; it reads MGNLRNKCVQ…YGYTSFDTFS (100 aa). Cystine bridges form between Cys-277–Cys-345 and Cys-336–Cys-351. N-linked (GlcNAc...) asparagine glycosylation is found at Asn-295, Asn-301, Asn-306, and Asn-338. An intramembrane region (pore-forming) is located at residues 370–384; the sequence is WAFLSLFRLMTQDFW. Over 385–397 the chain is Extracellular; that stretch reads ENLYQLTLRAAGK. The helical transmembrane segment at 398–423 threads the bilayer; it reads TYMIFFVLVIFLGSFYLINLILAVVA. At 424-768 the chain is on the cytoplasmic side; that stretch reads MAYEEQNQAT…HIVNLVVMDP (345 aa). A disordered region spans residues 455 to 528; the sequence is QEAAQQAAAT…EFHKSESEDS (74 aa). The span at 456–466 shows a compositional bias: low complexity; the sequence is EAAQQAAATTA. Ser-470 is subject to Phosphoserine. Residues 479 to 492 are compositionally biased toward low complexity; sequence LSDSSSEASKLSSK. Residues 495-506 are compositionally biased toward basic residues; sequence KERRNRRKKRKQ. Basic and acidic residues predominate over residues 507 to 528; the sequence is KEQSGGEEKDDDEFHKSESEDS. A phosphoserine mark is found at Ser-523, Ser-525, Ser-550, Ser-551, Ser-607, and Ser-730. A disordered region spans residues 584 to 627; sequence VGSENDFADDEHSTFEDNESRRDSLFVPRRHGERRNSNLSQTSR. The segment covering 593-607 has biased composition (basic and acidic residues); sequence DEHSTFEDNESRRDS. The II repeat unit spans residues 750 to 1022; it reads CSPYWLKVKH…QIAVDRMHKG (273 aa). Residues 769–787 form a helical membrane-spanning segment; sequence FVDLAITICIVLNTLFMAM. Residues 788-797 are Extracellular-facing; it reads EHYPMTEHFN. A helical transmembrane segment spans residues 798 to 820; the sequence is HVLTVGNLVFTGIFTAEMFLKII. Residues 821–830 are Cytoplasmic-facing; the sequence is AMDPYYYFQE. The chain crosses the membrane as a helical span at residues 831 to 849; the sequence is GWNIFDGFIVTLSLVELGL. Residues 850-854 lie on the Extracellular side of the membrane; the sequence is ANVEG. The chain crosses the membrane as a helical span at residues 855 to 874; the sequence is LSVLRSFRLLRVFKLAKSWP. The Cytoplasmic segment spans residues 875–891; it reads TLNMLIKIIGNSVGALG. A helical transmembrane segment spans residues 892-912; sequence NLTLVLAIIVFIFAVVGMQLF. The Extracellular portion of the chain corresponds to 913–938; it reads GKSYKDCVCKIATDCKLPRWHMNDFF. Cys-921 and Cys-927 are disulfide-bonded. Positions 939 to 952 form an intramembrane region, pore-forming; the sequence is HSFLIVFRVLCGEW. The Extracellular segment spans residues 953–965; the sequence is IETMWDCMEVAGQ. Cys-959 and Cys-968 form a disulfide bridge. Residues 966-992 form a helical membrane-spanning segment; that stretch reads AMCLTVFMMVMVIGNLVVLNLFLALLL. Residues 993 to 1218 lie on the Cytoplasmic side of the membrane; that stretch reads SSFSADNLAA…RTCFRIVEHN (226 aa). The segment at 1129-1163 is disordered; it reads TEDFSSESDLEESKEKLNESSSSSEGSTVDIGAPA. The III repeat unit spans residues 1200-1514; it reads RGKQWWNLRR…KKYYNAMKKL (315 aa). Residues 1219 to 1237 traverse the membrane as a helical segment; sequence WFETFIVFMILLSSGALAF. At 1238–1250 the chain is on the extracellular side; that stretch reads EDIYIDQRKTIKT. Residues 1251 to 1276 traverse the membrane as a helical segment; it reads MLEYADKVFTYIFILEMLLKWVAYGY. Topologically, residues 1277–1278 are cytoplasmic; that stretch reads QT. A helical transmembrane segment spans residues 1279-1304; sequence YFTNAWCWLDFLIVDVSLVSLTANAL. Over 1305–1313 the chain is Extracellular; that stretch reads GYSELGAIK. The helical transmembrane segment at 1314–1332 threads the bilayer; that stretch reads SLRTLRALRPLRALSRFEG. Residues 1333-1345 lie on the Cytoplasmic side of the membrane; that stretch reads MRVVVNALLGAIP. The helical transmembrane segment at 1346 to 1369 threads the bilayer; that stretch reads SIMNVLLVCLIFWLIFSIMGVNLF. Topologically, residues 1370-1415 are extracellular; the sequence is AGKFYHCVNTTTGDIFEISEVNNHSDCLKLIERNETARWKNVKVNF. A disulfide bond links Cys-1376 and Cys-1396. The pore-forming intramembrane region spans 1416 to 1433; the sequence is DNVGFGYLSLLQVATFKG. At 1434-1457 the chain is on the extracellular side; it reads WMDIMYAAVDSRNVELQPKYEESL. A helical transmembrane segment spans residues 1458–1483; that stretch reads YMYLYFVIFIIFGSFFTLNLFIGVII. Residues 1484-1541 lie on the Cytoplasmic side of the membrane; it reads DNFNQQKKKFGGQDIFMTEEQKKYYNAMKKLGSKKPQKPIPRPGNKFQGMVFDFVTRQ. Ser-1516 is subject to Phosphoserine; by PKC. An IV repeat occupies 1523-1821; sequence IPRPGNKFQG…WEKFDPDATQ (299 aa). The chain crosses the membrane as a helical span at residues 1542 to 1560; that stretch reads VFDISIMILICLNMVTMMV. Residues 1561-1571 lie on the Extracellular side of the membrane; sequence ETDDQSDYVTS. The segment at 1561–1571 is S1-S2 loop of repeat IV; that stretch reads ETDDQSDYVTS. Residues 1572-1593 form a helical membrane-spanning segment; sequence ILSRINLVFIVLFTGECVLKLI. Residues 1594-1601 lie on the Cytoplasmic side of the membrane; the sequence is SLRHYYFT. A helical membrane pass occupies residues 1602 to 1623; it reads IGWNIFDFVVVILSIVGMFLAE. An S3b-S4 loop of repeat IV region spans residues 1619–1636; sequence MFLAELIEKYFVSPTLFR. Over 1624–1636 the chain is Extracellular; sequence LIEKYFVSPTLFR. The helical transmembrane segment at 1637–1655 threads the bilayer; the sequence is VIRLARIGRILRLIKGAKG. The Cytoplasmic segment spans residues 1656–1665; that stretch reads IRTLLFALMM. A helical transmembrane segment spans residues 1666–1688; it reads SLPALFNIGLLLFLVMFIYAIFG. Over 1689–1711 the chain is Extracellular; sequence MSNFAYVKREVGIDDMFNFETFG. The pore-forming intramembrane region spans 1712-1726; the sequence is NSMICLFQITTSAGW. At 1727 to 1759 the chain is on the extracellular side; the sequence is DGLLAPILNSKPPDCDPNKVNPGSSVKGDCGNP. Cys-1741 and Cys-1756 are oxidised to a cystine. Residues 1760-1788 traverse the membrane as a helical segment; it reads SVGIFFFVSYIIISFLVVVNMYIAVILEN. The Cytoplasmic portion of the chain corresponds to 1789–2009; the sequence is FSVATEESAE…EGKDEKAKGK (221 aa). The IQ domain maps to 1915–1944; sequence EEVSAVIIQRAYRRHLLKRTVKQASFTYNK. The interval 1984–2009 is disordered; that stretch reads PSYDRVTKPIVEKHEQEGKDEKAKGK. The segment covering 1988 to 2009 has biased composition (basic and acidic residues); sequence RVTKPIVEKHEQEGKDEKAKGK.

This sequence belongs to the sodium channel (TC 1.A.1.10) family. Nav1.1/SCN1A subfamily. The Nav1.1 voltage-gated sodium channel consists of an ion-conducting alpha subunit SCN1A which is functional on its own regulated by one or more beta-1 (SCN1B), beta-2 (SCN2B), beta-3 (SCN3B) and beta-4 (SCN4B) subunits. SCN1B and SCN3B are non-covalently associated with SCN1A. SCN2B and SCN4B are disulfide-linked to SCN1A. SCN1B regulates both the expression at the plasma membrane and the voltage dependence of Nav1.1 inactivation. SCN3B and SCN4B reduce Nav1.1 conductance. Probably interacts with TMEM233; modulates the gating properties of NaV1.1. Interacts with FGF13; regulates the steady-state inactivation of Nav.1.1. Phosphorylation at Ser-1516 by PKC in a highly conserved cytoplasmic loop slows inactivation of the sodium channel and reduces peak sodium currents. As to expression, present in cerebellar Purkinje neurons (at protein level). Expressed by myelinated, non-C-fiber neurons in sensory ganglia.

The protein resides in the cell membrane. It catalyses the reaction Na(+)(in) = Na(+)(out). With respect to regulation, activated by the spider toxins Hm1a and Hm1b (H.maculata, AC P60992 and AC P0DOC5) eliciting acute pain and mechanical allodynia. Pore-forming subunit of Nav1.1, a voltage-gated sodium (Nav) channel that directly mediates the depolarizing phase of action potentials in excitable membranes. Navs, also called VGSCs (voltage-gated sodium channels) or VDSCs (voltage-dependent sodium channels), operate by switching between closed and open conformations depending on the voltage difference across the membrane. In the open conformation they allow Na(+) ions to selectively pass through the pore, along their electrochemical gradient. The influx of Na(+) ions provokes membrane depolarization, initiating the propagation of electrical signals throughout cells and tissues. By regulating the excitability of neurons, ensures that they respond appropriately to synaptic inputs, maintaining the balance between excitation and inhibition in brain neural circuits. Nav1.1 plays a role in controlling the excitability and action potential propagation from somatosensory neurons, thereby contributing to the sensory perception of mechanically-induced pain. The chain is Sodium channel protein type 1 subunit alpha from Mus musculus (Mouse).